The chain runs to 437 residues: Vitellogenin-1 (437 aa).

Residues Met1–Ala19 form the signal peptide. 2 disordered regions span residues Gln161 to Lys194 and Pro405 to Glu437. 2 stretches are compositionally biased toward polar residues: residues Gly174–Ser184 and Ser427–Glu437.

This sequence belongs to the AB hydrolase superfamily. Lipase family. Synthesized in the fat body and ovarian follicle cells and accumulate in the oocyte.

It localises to the secreted. Functionally, vitellogenin is the major yolk protein of eggs where it is used as a food source during embryogenesis. The polypeptide is Vitellogenin-1 (VG1-GAMMA) (Ceratitis capitata (Mediterranean fruit fly)).